Reading from the N-terminus, the 336-residue chain is Solute-binding protein Csal_2479 (336 aa).

The N-terminal stretch at 1-33 (MQTNKRLKMASCVKAAAMLGMLLSVSISTTAQA) is a signal peptide. Beta-D-glucuronate contacts are provided by residues His-42, Gln-80, Arg-156, Arg-177, Tyr-200, 217–218 (NN), and Glu-244.

Belongs to the bacterial solute-binding protein 7 family. The complex is comprised of an extracytoplasmic solute-binding protein and a heteromeric permease formed by two transmembrane proteins.

It is found in the periplasm. Its function is as follows. Solute-binding protein that binds D-glucuronate (in vitro). Probably part of a tripartite ATP-independent periplasmic (TRAP) transport system that mediates solute transport into the cytoplasm. The chain is Solute-binding protein Csal_2479 from Chromohalobacter salexigens (strain ATCC BAA-138 / DSM 3043 / CIP 106854 / NCIMB 13768 / 1H11).